A 264-amino-acid chain; its full sequence is Endonuclease V (264 aa).

Residues Asp-72 and Asp-137 each contribute to the Mg(2+) site.

The protein belongs to the endonuclease V family. Mg(2+) serves as cofactor.

Its subcellular location is the cytoplasm. It catalyses the reaction Endonucleolytic cleavage at apurinic or apyrimidinic sites to products with a 5'-phosphate.. DNA repair enzyme involved in the repair of deaminated bases. Selectively cleaves double-stranded DNA at the second phosphodiester bond 3' to a deoxyinosine leaving behind the intact lesion on the nicked DNA. The polypeptide is Endonuclease V (Halobacterium salinarum (strain ATCC 700922 / JCM 11081 / NRC-1) (Halobacterium halobium)).